The chain runs to 326 residues: Pancreas transcription factor 1 subunit alpha (326 aa).

Positions 162–214 (QLRQAANVRERRRMQSINDAFEGLRSHIPTLPYEKRLSKVDTLRLAIGYINFL) constitute a bHLH domain. Positions 229–240 (TGGCGGPGGSRH) are enriched in gly residues. 2 disordered regions span residues 229–249 (TGGC…PGNQ) and 304–326 (DPRK…EFVS).

As to quaternary structure, component of the pancreas transcription factor 1 complex (PTF1) which is composed of TCF3/p75, TCF12/p64 and PTF1A/p48. TCF3 is responsible for the nuclear import of the p48/p64 complex. Interacts with TCF3 and RBPSUH/RBP-Jkappa. Exocrine pancreas-specific. Expressed in azaserine-induced pancreatic tumors (at protein level). Expressed in AR42J cells but not in ARIP, DSL6A, or DSL6B cells. Down-regulation is associated with the change of an azaserine-induced acinar cell carcinoma to a ductal phenotype.

Its subcellular location is the nucleus. It localises to the cytoplasm. Its function is as follows. Transcription factor implicated in the cell fate determination in various organs. Binds to the E-box consensus sequence 5'-CANNTG-3'. Plays a role in early and late pancreas development and differentiation. Important for determining whether cells allocated to the pancreatic buds continue towards pancreatic organogenesis or revert back to duodenal fates. May be involved in the maintenance of exocrine pancreas-specific gene expression including ELA1 and amylase. Required for the formation of pancreatic acinar and ductal cells. Plays an important role in cerebellar development. Directly regulated by FOXN4 and RORC during retinal development, FOXN4-PTF1A pathway plays a central role in directing the differentiation of retinal progenitors towards horizontal and amacrine fates. This is Pancreas transcription factor 1 subunit alpha (Ptf1a) from Rattus norvegicus (Rat).